The primary structure comprises 343 residues: MSFSPQEALHRTIEHGEIFFDEMVDLMRQIMRGDVSPMMTAAILTGLRVKKETVDEIAAAATVMREFARPVPVADTSNLVDIVGTGGDGSHTFNISTCAMFVAAAAGARVAKHGNRSVSSKSGSADALEALGAVIELQPDQVAAAIDRTGIGFMFAPIHHPSMKVVAPVRREMGVRTIFNILGPLTNPASAPSVLMGVFHPDLVGIQARVLRELGTERAMVVWGRDNMDEISLGAGTLVGELRDGKVREYEIHPEDFGIAMSASRNLRVDGPEQSIQMLRAVLDNEPGPALDIVALNAGAALYVAGVASDIGDGLARARAAIANGSARQRLQQYVETTRALVA.

5-phospho-alpha-D-ribose 1-diphosphate contacts are provided by residues Gly-84, 87-88 (GD), Thr-92, 94-97 (NIST), 112-120 (KHGNRSVSS), and Ser-124. An anthranilate-binding site is contributed by Gly-84. Ser-96 serves as a coordination point for Mg(2+). Asn-115 provides a ligand contact to anthranilate. Residue Arg-170 participates in anthranilate binding. The Mg(2+) site is built by Asp-229 and Glu-230.

This sequence belongs to the anthranilate phosphoribosyltransferase family. In terms of assembly, homodimer. Requires Mg(2+) as cofactor.

It carries out the reaction N-(5-phospho-beta-D-ribosyl)anthranilate + diphosphate = 5-phospho-alpha-D-ribose 1-diphosphate + anthranilate. Its pathway is amino-acid biosynthesis; L-tryptophan biosynthesis; L-tryptophan from chorismate: step 2/5. Its function is as follows. Catalyzes the transfer of the phosphoribosyl group of 5-phosphorylribose-1-pyrophosphate (PRPP) to anthranilate to yield N-(5'-phosphoribosyl)-anthranilate (PRA). This is Anthranilate phosphoribosyltransferase from Stenotrophomonas maltophilia (strain K279a).